A 143-amino-acid chain; its full sequence is Myosin 1 light chain cam2 (143 aa).

3 EF-hand domains span residues 6 to 41, 75 to 110, and 111 to 143; these read EQTD…LGIN, ESEE…LGEK, and LSDN…IMAK.

This sequence belongs to the calmodulin family. In terms of assembly, interacts with myo1 and pik1.

Its subcellular location is the cytoplasm. The protein resides in the prospore membrane. Functionally, plays a role in meiosis and sporulation. This Schizosaccharomyces pombe (strain 972 / ATCC 24843) (Fission yeast) protein is Myosin 1 light chain cam2.